Consider the following 182-residue polypeptide: Homeobox protein pnx (182 aa).

Residues 1–34 (MHEETSNSTLQGKTSFSIADILDPAKFNGTRETR) are important for interaction with tle3a. The interval 24–63 (PAKFNGTRETREISNNRESPKTTSPTQDPSAPNIANASAA) is disordered. Positions 29 to 43 (GTRETREISNNRESP) are enriched in basic and acidic residues. Over residues 52 to 63 (PSAPNIANASAA) the composition is skewed to low complexity. A DNA-binding region (homeobox) is located at residues 67-126 (SKRIRTAFTLDQLRILERSFQSSHYLSVFERHCIASALGLSETQVKIWFQNRRTKWKKEL).

Belongs to the NK-1 homeobox family. As to quaternary structure, interacts with tle3a.

The protein resides in the nucleus. Functionally, transcriptional repressor. Activity as a repressor is enhanced by binding to the corepressor tle3a. The chain is Homeobox protein pnx from Danio rerio (Zebrafish).